The following is a 401-amino-acid chain: Glycerol-1-phosphate dehydrogenase [NAD(P)+] (401 aa).

Residues aspartate 57, 118–122 (GTIHD), and 140–143 (TAPS) each bind NAD(+). Residue aspartate 145 participates in substrate binding. NAD(+) is bound at residue serine 149. Aspartate 192 is a substrate binding site. Ni(2+) is bound by residues aspartate 192 and histidine 272. Histidine 276 serves as a coordination point for substrate. Histidine 292 lines the Ni(2+) pocket.

Belongs to the glycerol-1-phosphate dehydrogenase family. Homodimer. The cofactor is Ni(2+).

It localises to the cytoplasm. It carries out the reaction sn-glycerol 1-phosphate + NAD(+) = dihydroxyacetone phosphate + NADH + H(+). It catalyses the reaction sn-glycerol 1-phosphate + NADP(+) = dihydroxyacetone phosphate + NADPH + H(+). Its function is as follows. Catalyzes the NAD(P)H-dependent reduction of dihydroxyacetonephosphate (DHAP or glycerone phosphate) to glycerol 1-phosphate (G1P). The G1P thus generated is probably used for the synthesis of phosphoglycerolipids in Gram-positive bacterial species. The polypeptide is Glycerol-1-phosphate dehydrogenase [NAD(P)+] (Bacillus licheniformis (strain ATCC 14580 / DSM 13 / JCM 2505 / CCUG 7422 / NBRC 12200 / NCIMB 9375 / NCTC 10341 / NRRL NRS-1264 / Gibson 46)).